Consider the following 300-residue polypeptide: Tegument protein VP22 (300 aa).

The disordered stretch occupies residues methionine 1 to alanine 148. 2 stretches are compositionally biased toward basic and acidic residues: residues cysteine 10–leucine 22 and proline 50–glutamate 61. Residues glycine 163–lysine 166 carry the Nuclear localization signal motif. Residues lysine 174–valine 267 are interaction with gE. A Nuclear export signal motif is present at residues leucine 232–threonine 244. Residues alanine 269–alanine 292 show a composition bias toward low complexity. The tract at residues alanine 269 to glutamate 300 is disordered.

Belongs to the alphaherpesvirinae VP22 tegument protein family. In terms of assembly, interacts with gE (via C-terminus); this interaction is necessary for the recruitment of VP22 to the Golgi and its packaging into virions. Interacts with gM (via C-terminus). Interacts with VP16; this interaction allows the formation of a tripartite complex composed of VP16, VP22 and UL41/VHS. Interacts with the capsid-binding protein UL16. Interacts with host CGAS. In terms of processing, highly phosphorylated in the host cell. Packaging is selective for underphosphorylated forms.

The protein resides in the virion tegument. It localises to the host cytoplasm. Its subcellular location is the host nucleus. The protein localises to the host Golgi apparatus. In terms of biological role, tegument protein that plays different roles during the time course of infection. Participates in both the accumulation of viral mRNAs and viral protein translation at late time of infection. Modulates the RNase activity of the virion host shutoff protein UL41 probably to ensure necessary levels of key cellular mRNAs and proteins. Plays a role in microtubule reorganization that occurs after viral infection by stabilizing microtubule network. Plays a role in the inhibition of host innate immune system by targeting the CGAS enzymatic activity which is the principal cytosolic DNA sensor that detects invading viral DNA. Acts by mediating disruption of liquid-like droplets in which CGAS is activated, thereby preventing CGAS activity. The chain is Tegument protein VP22 from Homo sapiens (Human).